Consider the following 295-residue polypeptide: Transcription factor bHLH19 (295 aa).

A bHLH domain is found at 115 to 164 (VLAKEHVLAERKRREKLSEKFIALSALLPGLKKADKVTILDDAISRMKQL).

As to quaternary structure, homodimer. As to expression, expressed in roots and leaves.

The protein localises to the nucleus. The protein is Transcription factor bHLH19 (BHLH19) of Arabidopsis thaliana (Mouse-ear cress).